The following is a 107-amino-acid chain: Inner membrane protein YiaW (107 aa).

Residues 1 to 6 (MFLDYF) are Cytoplasmic-facing. Residues 7–29 (ALGVLIFVFLVIFYGIIILHDIP) traverse the membrane as a helical segment. Residues 30–43 (YLIAKKRNHPHADA) lie on the Periplasmic side of the membrane. A helical membrane pass occupies residues 44-66 (IHVAGWVSLFTLHVIWPFLWIWA). Residues 67-107 (TLYRPERGWGMQSHDSSVMQLQQRIAGLEKQLADIKSSSAE) lie on the Cytoplasmic side of the membrane.

To E.coli YibI.

The protein resides in the cell inner membrane. This chain is Inner membrane protein YiaW (yiaW), found in Escherichia coli O157:H7.